We begin with the raw amino-acid sequence, 45 residues long: DNA-directed RNA polymerase subunit Rpo12 (45 aa).

Residues C8, C23, and C26 each contribute to the Zn(2+) site.

It belongs to the archaeal Rpo12/eukaryotic RPC10 RNA polymerase subunit family. Part of the RNA polymerase complex. It depends on Zn(2+) as a cofactor.

Its subcellular location is the cytoplasm. It catalyses the reaction RNA(n) + a ribonucleoside 5'-triphosphate = RNA(n+1) + diphosphate. DNA-dependent RNA polymerase (RNAP) catalyzes the transcription of DNA into RNA using the four ribonucleoside triphosphates as substrates. In Methanosarcina acetivorans (strain ATCC 35395 / DSM 2834 / JCM 12185 / C2A), this protein is DNA-directed RNA polymerase subunit Rpo12.